The sequence spans 109 residues: Spermidine export protein MdtI (109 aa).

4 helical membrane passes run 6 to 26, 36 to 56, 64 to 84, and 88 to 108; these read FYPIAFLILAVMLEIVANILL, WLGILSLLSVLGAFSALAQAV, AYAMWGGFGIAATVAAGWILF, and LNYKGWIGLILLLAGMVMIKL.

The protein belongs to the drug/metabolite transporter (DMT) superfamily. Small multidrug resistance (SMR) (TC 2.A.7.1) family. MdtI subfamily. As to quaternary structure, forms a complex with MdtJ.

The protein resides in the cell inner membrane. Catalyzes the excretion of spermidine. This is Spermidine export protein MdtI from Yersinia pseudotuberculosis serotype I (strain IP32953).